The primary structure comprises 364 residues: tRNA 2-selenouridine synthase (364 aa).

The Rhodanese domain maps to 14 to 137 (LIADTPIIDV…LRQTAIQATI (124 aa)). Cys97 functions as the S-selanylcysteine intermediate in the catalytic mechanism.

The protein belongs to the SelU family. In terms of assembly, monomer.

It catalyses the reaction 5-methylaminomethyl-2-thiouridine(34) in tRNA + selenophosphate + (2E)-geranyl diphosphate + H2O + H(+) = 5-methylaminomethyl-2-selenouridine(34) in tRNA + (2E)-thiogeraniol + phosphate + diphosphate. The enzyme catalyses 5-methylaminomethyl-2-thiouridine(34) in tRNA + (2E)-geranyl diphosphate = 5-methylaminomethyl-S-(2E)-geranyl-thiouridine(34) in tRNA + diphosphate. It carries out the reaction 5-methylaminomethyl-S-(2E)-geranyl-thiouridine(34) in tRNA + selenophosphate + H(+) = 5-methylaminomethyl-2-(Se-phospho)selenouridine(34) in tRNA + (2E)-thiogeraniol. The catalysed reaction is 5-methylaminomethyl-2-(Se-phospho)selenouridine(34) in tRNA + H2O = 5-methylaminomethyl-2-selenouridine(34) in tRNA + phosphate. Involved in the post-transcriptional modification of the uridine at the wobble position (U34) of tRNA(Lys), tRNA(Glu) and tRNA(Gln). Catalyzes the conversion of 2-thiouridine (S2U-RNA) to 2-selenouridine (Se2U-RNA). Acts in a two-step process involving geranylation of 2-thiouridine (S2U) to S-geranyl-2-thiouridine (geS2U) and subsequent selenation of the latter derivative to 2-selenouridine (Se2U) in the tRNA chain. The chain is tRNA 2-selenouridine synthase from Escherichia coli (strain SMS-3-5 / SECEC).